We begin with the raw amino-acid sequence, 385 residues long: U6 small nuclear RNA (adenine-(43)-N(6))-methyltransferase (385 aa).

R54, G83, E106, and N155 together coordinate S-adenosyl-L-methionine.

This sequence belongs to the methyltransferase superfamily. METTL16/RlmF family.

The protein localises to the cytoplasm. The protein resides in the nucleus. The catalysed reaction is adenosine in U6 snRNA + S-adenosyl-L-methionine = N(6)-methyladenosine in U6 snRNA + S-adenosyl-L-homocysteine + H(+). Its function is as follows. RNA N6-methyltransferase that mediates N6-methylation of adenine of U6 small nuclear RNA (U6 snRNA). This Schizosaccharomyces pombe (strain 972 / ATCC 24843) (Fission yeast) protein is U6 small nuclear RNA (adenine-(43)-N(6))-methyltransferase.